The sequence spans 141 residues: Hemoglobin subunit alpha (141 aa).

One can recognise a Globin domain in the interval 1-141 (VLSPADKTNV…VSTVLTSKYR (141 aa)). S3 carries the phosphoserine modification. K7 carries the post-translational modification N6-succinyllysine. Phosphothreonine is present on T8. Residue K11 is modified to N6-succinyllysine. An N6-acetyllysine; alternate modification is found at K16. K16 bears the N6-succinyllysine; alternate mark. At Y24 the chain carries Phosphotyrosine. A Phosphoserine modification is found at S35. At K40 the chain carries N6-succinyllysine. Phosphoserine is present on S49. H58 contacts O2. H87 serves as a coordination point for heme b. S102 is subject to Phosphoserine. T108 is modified (phosphothreonine). 2 positions are modified to phosphoserine: S124 and S131. Residues T134 and T137 each carry the phosphothreonine modification. S138 carries the post-translational modification Phosphoserine.

It belongs to the globin family. Heterotetramer of two alpha chains and two beta chains. Red blood cells.

Functionally, involved in oxygen transport from the lung to the various peripheral tissues. Its function is as follows. Hemopressin acts as an antagonist peptide of the cannabinoid receptor CNR1. Hemopressin-binding efficiently blocks cannabinoid receptor CNR1 and subsequent signaling. The polypeptide is Hemoglobin subunit alpha (HBA) (Gorilla gorilla gorilla (Western lowland gorilla)).